The following is a 370-amino-acid chain: Protein phosphatase 2C homolog 2 (370 aa).

Positions His23 to Phe291 constitute a PPM-type phosphatase domain. Residues Asp63, Gly64, Asp233, and Asp282 each contribute to the Mn(2+) site. A phosphoserine mark is found at Ser355 and Ser357.

The protein belongs to the PP2C family. As to quaternary structure, monomer. Mg(2+) serves as cofactor. The cofactor is Mn(2+).

The protein resides in the nucleus. The protein localises to the cytoplasm. It localises to the cytosol. The enzyme catalyses O-phospho-L-seryl-[protein] + H2O = L-seryl-[protein] + phosphate. The catalysed reaction is O-phospho-L-threonyl-[protein] + H2O = L-threonyl-[protein] + phosphate. Activity is reduced when phosphosrylated at Ser-355/Ser-357. Functionally, dephosphorylating regulator for many key proteins. Has an important role in osmotic stability and cell shape control. It may negatively regulate the osmosensing signal transmitted through wis1 map kinase. The polypeptide is Protein phosphatase 2C homolog 2 (ptc2) (Schizosaccharomyces pombe (strain 972 / ATCC 24843) (Fission yeast)).